We begin with the raw amino-acid sequence, 121 residues long: Putative RNase MJ0127 (121 aa).

Catalysis depends on residues Arg76 and His81. The RX(4)HXY motif motif lies at 76 to 83; that stretch reads RDKLIHHY. Tyr83 is subject to O-di-AMP-tyrosine.

It belongs to the HepT RNase toxin family. In terms of assembly, homodimer, probably forms a complex with cognate antitoxin MJ0128. Post-translationally, modified by cognate antitoxin MJ0128; probably at least 2 successive AMPylation events occur on Tyr-83.

Its function is as follows. Probable toxic component of a putative type VII toxin-antitoxin (TA) system, probably an RNase. Probably neutralized by cognate antitoxin MJ0128. Neutralization may be due to AMPylation by MJ0128. This is Putative RNase MJ0127 from Methanocaldococcus jannaschii (strain ATCC 43067 / DSM 2661 / JAL-1 / JCM 10045 / NBRC 100440) (Methanococcus jannaschii).